Reading from the N-terminus, the 228-residue chain is Cytidylate kinase (228 aa).

17–25 (GPTASGKGT) is an ATP binding site.

The protein belongs to the cytidylate kinase family. Type 1 subfamily.

The protein resides in the cytoplasm. The enzyme catalyses CMP + ATP = CDP + ADP. It carries out the reaction dCMP + ATP = dCDP + ADP. This Burkholderia vietnamiensis (strain G4 / LMG 22486) (Burkholderia cepacia (strain R1808)) protein is Cytidylate kinase.